Consider the following 118-residue polypeptide: Large ribosomal subunit protein bL20 (118 aa).

The protein belongs to the bacterial ribosomal protein bL20 family.

Binds directly to 23S ribosomal RNA and is necessary for the in vitro assembly process of the 50S ribosomal subunit. It is not involved in the protein synthesizing functions of that subunit. This Cupriavidus metallidurans (strain ATCC 43123 / DSM 2839 / NBRC 102507 / CH34) (Ralstonia metallidurans) protein is Large ribosomal subunit protein bL20.